Consider the following 374-residue polypeptide: uncharacterized protein (374 aa).

Residues 197–223 are disordered; the sequence is GTTTTTNNNNNNNNNNNNNNNNGTNIT. Positions 198–223 are enriched in low complexity; it reads TTTTTNNNNNNNNNNNNNNNNGTNIT. A coiled-coil region spans residues 302-342; sequence DEVSDCNDINTNLKKKRKQQEQLQIEKEKKLLTIQQEQTKI.

This is an uncharacterized protein from Dictyostelium discoideum (Social amoeba).